We begin with the raw amino-acid sequence, 316 residues long: ATP synthase gamma chain (316 aa).

The protein belongs to the ATPase gamma chain family. In terms of assembly, F-type ATPases have 2 components, CF(1) - the catalytic core - and CF(0) - the membrane proton channel. CF(1) has five subunits: alpha(3), beta(3), gamma(1), delta(1), epsilon(1). CF(0) has three main subunits: a, b and c.

The protein resides in the cellular thylakoid membrane. Functionally, produces ATP from ADP in the presence of a proton gradient across the membrane. The gamma chain is believed to be important in regulating ATPase activity and the flow of protons through the CF(0) complex. The sequence is that of ATP synthase gamma chain from Prochlorococcus marinus (strain MIT 9313).